The chain runs to 314 residues: ATP synthase gamma chain (314 aa).

Belongs to the ATPase gamma chain family. F-type ATPases have 2 components, CF(1) - the catalytic core - and CF(0) - the membrane proton channel. CF(1) has five subunits: alpha(3), beta(3), gamma(1), delta(1), epsilon(1). CF(0) has three main subunits: a, b and c.

Its subcellular location is the cellular thylakoid membrane. Functionally, produces ATP from ADP in the presence of a proton gradient across the membrane. The gamma chain is believed to be important in regulating ATPase activity and the flow of protons through the CF(0) complex. The sequence is that of ATP synthase gamma chain from Synechococcus sp. (strain JA-2-3B'a(2-13)) (Cyanobacteria bacterium Yellowstone B-Prime).